Here is a 299-residue protein sequence, read N- to C-terminus: Small ribosomal subunit protein uS2 (299 aa).

The interval 210–299 (AEKEEQTQVV…GAATDNSWAS (90 aa)) is disordered. The segment covering 275-285 (WASTGTATVGP) has biased composition (polar residues).

This sequence belongs to the universal ribosomal protein uS2 family. In terms of assembly, component of the small ribosomal subunit. Mature ribosomes consist of a small (40S) and a large (60S) subunit. The 40S subunit contains about 33 different proteins and 1 molecule of RNA (18S). The 60S subunit contains about 49 different proteins and 3 molecules of RNA (28S, 5.8S and 5S). Interacts with ribosomal protein S21.

It localises to the cytoplasm. Required for the assembly and/or stability of the 40S ribosomal subunit. Required for the processing of the 20S rRNA-precursor to mature 18S rRNA in a late step of the maturation of 40S ribosomal subunits. In Ornithodoros parkeri (Soft tick), this protein is Small ribosomal subunit protein uS2.